Here is a 289-residue protein sequence, read N- to C-terminus: MYG1 protein TC_0665 (289 aa).

This sequence belongs to the MYG1 family.

This is MYG1 protein TC_0665 from Chlamydia muridarum (strain MoPn / Nigg).